Consider the following 274-residue polypeptide: Bis(5'-nucleosyl)-tetraphosphatase, symmetrical (274 aa).

Belongs to the Ap4A hydrolase family.

It carries out the reaction P(1),P(4)-bis(5'-adenosyl) tetraphosphate + H2O = 2 ADP + 2 H(+). Functionally, hydrolyzes diadenosine 5',5'''-P1,P4-tetraphosphate to yield ADP. This Shewanella sediminis (strain HAW-EB3) protein is Bis(5'-nucleosyl)-tetraphosphatase, symmetrical.